Reading from the N-terminus, the 102-residue chain is Large ribosomal subunit protein bL21 (102 aa).

The protein belongs to the bacterial ribosomal protein bL21 family. As to quaternary structure, part of the 50S ribosomal subunit. Contacts protein L20.

Its function is as follows. This protein binds to 23S rRNA in the presence of protein L20. This chain is Large ribosomal subunit protein bL21, found in Staphylococcus aureus.